Reading from the N-terminus, the 148-residue chain is UPF0179 protein Mevan_0979 (148 aa).

This sequence belongs to the UPF0179 family.

In Methanococcus vannielii (strain ATCC 35089 / DSM 1224 / JCM 13029 / OCM 148 / SB), this protein is UPF0179 protein Mevan_0979.